The chain runs to 272 residues: NH(3)-dependent NAD(+) synthetase (272 aa).

45-52 contacts ATP; it reads GISGGQDS. Asp-51 serves as a coordination point for Mg(2+). Arg-138 provides a ligand contact to deamido-NAD(+). Thr-158 contacts ATP. Residue Glu-163 coordinates Mg(2+). Positions 171 and 178 each coordinate deamido-NAD(+). ATP contacts are provided by Lys-187 and Thr-209. 258–259 contributes to the deamido-NAD(+) binding site; it reads HK.

This sequence belongs to the NAD synthetase family. In terms of assembly, homodimer.

The enzyme catalyses deamido-NAD(+) + NH4(+) + ATP = AMP + diphosphate + NAD(+) + H(+). It participates in cofactor biosynthesis; NAD(+) biosynthesis; NAD(+) from deamido-NAD(+) (ammonia route): step 1/1. Its function is as follows. Catalyzes the ATP-dependent amidation of deamido-NAD to form NAD. Uses ammonia as a nitrogen source. In Bacillus cereus (strain G9842), this protein is NH(3)-dependent NAD(+) synthetase.